Reading from the N-terminus, the 317-residue chain is ADP-L-glycero-D-manno-heptose-6-epimerase (317 aa).

NADP(+) is bound by residues 10–11 (FI), 31–32 (DD), Lys38, Lys53, 76–80 (QGACS), and Asn93. Tyr140 acts as the Proton acceptor in catalysis. Lys144 lines the NADP(+) pocket. Asn169 serves as a coordination point for substrate. Positions 170 and 178 each coordinate NADP(+). Lys178 serves as the catalytic Proton acceptor. Substrate-binding positions include Ala180, His187, 201-204 (FEGC), Arg214, and Tyr278.

It belongs to the NAD(P)-dependent epimerase/dehydratase family. HldD subfamily. In terms of assembly, homopentamer. It depends on NADP(+) as a cofactor.

It carries out the reaction ADP-D-glycero-beta-D-manno-heptose = ADP-L-glycero-beta-D-manno-heptose. It participates in nucleotide-sugar biosynthesis; ADP-L-glycero-beta-D-manno-heptose biosynthesis; ADP-L-glycero-beta-D-manno-heptose from D-glycero-beta-D-manno-heptose 7-phosphate: step 4/4. Functionally, catalyzes the interconversion between ADP-D-glycero-beta-D-manno-heptose and ADP-L-glycero-beta-D-manno-heptose via an epimerization at carbon 6 of the heptose. This is ADP-L-glycero-D-manno-heptose-6-epimerase from Nitrosococcus oceani (strain ATCC 19707 / BCRC 17464 / JCM 30415 / NCIMB 11848 / C-107).